A 367-amino-acid chain; its full sequence is MDDKKNAPSSDKSKALAAALAQIEKQFGKGSVMRMEDGAVVEEVQVVSTGSLGLDIALGVGGLPRGRVVEIYGPESSGKTTLTLQTIAEMQKLGGTCAFIDAEHALDVTYAQKLGINLSDLLISQPDTGEQALEICDALVRSGGVDLIVIDSVAALTPRAEIEGDMGDSLPGLQARLMSQALRKLTGSINRTNTLVIFINQIRMKIGVMFGNPETTTGGNALKFYASVRLDIRRTGSIKSGDEVIGNETKVKVVKNKIAPPFKEAHFDILYGEGTSREGEILDLGSDAKIVEKSGAWYSYNGERIGQGKDNARNYLKERPDLAREIENKVRVSLGVPELGAIKSDEPVAKKASAKESKEAKELKEVE.

Gly73–Thr80 is an ATP binding site. The interval Asp345–Glu367 is disordered.

Belongs to the RecA family.

It localises to the cytoplasm. Functionally, can catalyze the hydrolysis of ATP in the presence of single-stranded DNA, the ATP-dependent uptake of single-stranded DNA by duplex DNA, and the ATP-dependent hybridization of homologous single-stranded DNAs. It interacts with LexA causing its activation and leading to its autocatalytic cleavage. In Janthinobacterium sp. (strain Marseille) (Minibacterium massiliensis), this protein is Protein RecA.